Consider the following 149-residue polypeptide: Arginine repressor (149 aa).

The protein belongs to the ArgR family.

The protein localises to the cytoplasm. Its pathway is amino-acid biosynthesis; L-arginine biosynthesis [regulation]. Functionally, regulates arginine biosynthesis genes. This chain is Arginine repressor, found in Listeria monocytogenes serotype 4b (strain F2365).